The following is a 104-amino-acid chain: Large ribosomal subunit protein uL24 (104 aa).

It belongs to the universal ribosomal protein uL24 family. Part of the 50S ribosomal subunit.

One of two assembly initiator proteins, it binds directly to the 5'-end of the 23S rRNA, where it nucleates assembly of the 50S subunit. Its function is as follows. One of the proteins that surrounds the polypeptide exit tunnel on the outside of the subunit. The sequence is that of Large ribosomal subunit protein uL24 from Methylorubrum populi (strain ATCC BAA-705 / NCIMB 13946 / BJ001) (Methylobacterium populi).